The following is a 363-amino-acid chain: Protein MAK32 (363 aa).

To S.pombe SpAC4G8.14c.

In terms of biological role, necessary for the structural stability of L-A double-stranded RNA-containing particles. Necessary for growth at 37 degrees Celsius as well as for maintenance of the killer plasmid. The sequence is that of Protein MAK32 (MAK32) from Saccharomyces cerevisiae (strain ATCC 204508 / S288c) (Baker's yeast).